A 160-amino-acid polypeptide reads, in one-letter code: Endoribonuclease YbeY (160 aa).

Residues histidine 111, histidine 115, and histidine 121 each contribute to the Zn(2+) site.

It belongs to the endoribonuclease YbeY family. Zn(2+) serves as cofactor.

The protein resides in the cytoplasm. Functionally, single strand-specific metallo-endoribonuclease involved in late-stage 70S ribosome quality control and in maturation of the 3' terminus of the 16S rRNA. This is Endoribonuclease YbeY from Stutzerimonas stutzeri (strain A1501) (Pseudomonas stutzeri).